The sequence spans 218 residues: Ribose-5-phosphate isomerase A (218 aa).

Substrate-binding positions include 28–31 (TGST), 81–84 (DGAD), and 94–97 (KGGG). Glutamate 103 acts as the Proton acceptor in catalysis. Lysine 121 contributes to the substrate binding site.

It belongs to the ribose 5-phosphate isomerase family. Homodimer.

It carries out the reaction aldehydo-D-ribose 5-phosphate = D-ribulose 5-phosphate. Its pathway is carbohydrate degradation; pentose phosphate pathway; D-ribose 5-phosphate from D-ribulose 5-phosphate (non-oxidative stage): step 1/1. Functionally, catalyzes the reversible conversion of ribose-5-phosphate to ribulose 5-phosphate. This is Ribose-5-phosphate isomerase A from Methylococcus capsulatus (strain ATCC 33009 / NCIMB 11132 / Bath).